The following is a 510-amino-acid chain: 2,3-bisphosphoglycerate-independent phosphoglycerate mutase (510 aa).

Mn(2+)-binding residues include Asp-13 and Ser-63. Ser-63 functions as the Phosphoserine intermediate in the catalytic mechanism. Residues His-124, 154–155, Arg-186, Arg-192, 262–265, and Lys-334 each bind substrate; these read RD and RADR. Residues Asp-401, His-405, Asp-442, His-443, and His-461 each coordinate Mn(2+).

Belongs to the BPG-independent phosphoglycerate mutase family. As to quaternary structure, monomer. Mn(2+) serves as cofactor.

The catalysed reaction is (2R)-2-phosphoglycerate = (2R)-3-phosphoglycerate. Its pathway is carbohydrate degradation; glycolysis; pyruvate from D-glyceraldehyde 3-phosphate: step 3/5. Its function is as follows. Catalyzes the interconversion of 2-phosphoglycerate and 3-phosphoglycerate. In Vibrio campbellii (strain ATCC BAA-1116), this protein is 2,3-bisphosphoglycerate-independent phosphoglycerate mutase.